A 98-amino-acid chain; its full sequence is Co-chaperonin GroES 3 (98 aa).

Belongs to the GroES chaperonin family. Heptamer of 7 subunits arranged in a ring. Interacts with the chaperonin GroEL.

Its subcellular location is the cytoplasm. Its function is as follows. Together with the chaperonin GroEL, plays an essential role in assisting protein folding. The GroEL-GroES system forms a nano-cage that allows encapsulation of the non-native substrate proteins and provides a physical environment optimized to promote and accelerate protein folding. GroES binds to the apical surface of the GroEL ring, thereby capping the opening of the GroEL channel. The sequence is that of Co-chaperonin GroES 3 from Mesorhizobium japonicum (strain LMG 29417 / CECT 9101 / MAFF 303099) (Mesorhizobium loti (strain MAFF 303099)).